The following is a 494-amino-acid chain: MDKILYDALTFDDVLLVPAYSNVLPKETVVKSRLTRQIEVNIPLVSAAMDTVTEAELAIALARAGGIGIIHKNLSIDEQARQVAKVKRFESGIIRNPIHLFEDATIQDAIDLMIRHSISGIPVVEHPTPEGCLLLKGIVTNRDLRMTASSDEKITTIMTTNLVTAKEGIDLLTAEDILMRNKIEKLLIIDDNGYLKGLITFKDIQKRKQCPDACKDSQGRLRAGAAVGIRANTMSRVDALVAAGVDVVAVDTAHGHSQAVLDMVATIKQKYPELQVIAGNVATPEAVRDLVKAGADAVKVGIGPGSICTTRIVAGVGMPQLTAIMKCAEEAKKTDIPLIADGGIKYSGDIAKALAAGADSVMMGSVFAGTDESPGETILYEGRRFKAYRGMGSLGAMSEPEGSSDRYFQDVSAETKKYVPEGIEGRIPAKGKLDEVVYQLIGGLKSAMGYCGVRTITELKENTRFVRITSAGLRESHPHDVMITKEAPNYSTSA.

2 consecutive CBS domains span residues 93 to 154 (IIRN…DEKI) and 158 to 217 (MTTN…CKDS). Residues Asp-251 and 301–303 (GIG) each bind NAD(+). Residues Gly-303 and Gly-305 each coordinate K(+). Residue Ser-306 participates in IMP binding. Residue Cys-308 coordinates K(+). Catalysis depends on Cys-308, which acts as the Thioimidate intermediate. Residues 341–343 (DGG), 364–365 (GS), and 388–392 (YRGMG) each bind IMP. Arg-406 (proton acceptor) is an active-site residue. Residue Glu-421 coordinates IMP. K(+)-binding residues include Glu-475, Ser-476, and His-477.

This sequence belongs to the IMPDH/GMPR family. In terms of assembly, homotetramer. It depends on K(+) as a cofactor.

It carries out the reaction IMP + NAD(+) + H2O = XMP + NADH + H(+). The protein operates within purine metabolism; XMP biosynthesis via de novo pathway; XMP from IMP: step 1/1. With respect to regulation, mycophenolic acid (MPA) is a non-competitive inhibitor that prevents formation of the closed enzyme conformation by binding to the same site as the amobile flap. In contrast, mizoribine monophosphate (MZP) is a competitive inhibitor that induces the closed conformation. MPA is a potent inhibitor of mammalian IMPDHs but a poor inhibitor of the bacterial enzymes. MZP is a more potent inhibitor of bacterial IMPDH. Catalyzes the conversion of inosine 5'-phosphate (IMP) to xanthosine 5'-phosphate (XMP), the first committed and rate-limiting step in the de novo synthesis of guanine nucleotides, and therefore plays an important role in the regulation of cell growth. The protein is Inosine-5'-monophosphate dehydrogenase of Chlorobaculum tepidum (strain ATCC 49652 / DSM 12025 / NBRC 103806 / TLS) (Chlorobium tepidum).